A 513-amino-acid polypeptide reads, in one-letter code: Probable DNA ligase (513 aa).

Residue Glu-215 coordinates ATP. Lys-217 (N6-AMP-lysine intermediate) is an active-site residue. The ATP site is built by Arg-222, Arg-237, Glu-266, Phe-306, Arg-378, and Lys-384.

Belongs to the ATP-dependent DNA ligase family. The cofactor is Mg(2+).

It carries out the reaction ATP + (deoxyribonucleotide)n-3'-hydroxyl + 5'-phospho-(deoxyribonucleotide)m = (deoxyribonucleotide)n+m + AMP + diphosphate.. DNA ligase that seals nicks in double-stranded DNA during DNA replication, DNA recombination and DNA repair. The chain is Probable DNA ligase from Mycobacterium marinum (strain ATCC BAA-535 / M).